A 184-amino-acid polypeptide reads, in one-letter code: dCTP deaminase (184 aa).

DCTP contacts are provided by residues lysine 107–arginine 112, threonine 131–glutamate 133, glutamine 152, tyrosine 166, and glutamine 176. Residue glutamate 133 is the Proton donor/acceptor of the active site.

It belongs to the dCTP deaminase family. Homotrimer.

It carries out the reaction dCTP + H2O + H(+) = dUTP + NH4(+). Its pathway is pyrimidine metabolism; dUMP biosynthesis; dUMP from dCTP (dUTP route): step 1/2. In terms of biological role, catalyzes the deamination of dCTP to dUTP. This is dCTP deaminase from Rhizorhabdus wittichii (strain DSM 6014 / CCUG 31198 / JCM 15750 / NBRC 105917 / EY 4224 / RW1) (Sphingomonas wittichii).